A 577-amino-acid chain; its full sequence is Glycine--tRNA ligase (577 aa).

Residues Arg96 and Glu161 each coordinate substrate. Residues 193–195, 203–208, 319–320, and 434–437 each bind ATP; these read RNE, IRLREF, EI, and GIDR. 208 to 212 is a binding site for substrate; that stretch reads FSQAE. Substrate is bound at residue 430–434; that stretch reads EPSFG.

Belongs to the class-II aminoacyl-tRNA synthetase family.

It is found in the cytoplasm. The enzyme catalyses tRNA(Gly) + glycine + ATP = glycyl-tRNA(Gly) + AMP + diphosphate. In terms of biological role, catalyzes the attachment of glycine to tRNA(Gly). In Methanothrix thermoacetophila (strain DSM 6194 / JCM 14653 / NBRC 101360 / PT) (Methanosaeta thermophila), this protein is Glycine--tRNA ligase.